The following is a 95-amino-acid chain: Aspartyl/glutamyl-tRNA(Asn/Gln) amidotransferase subunit C (95 aa).

The protein belongs to the GatC family. In terms of assembly, heterotrimer of A, B and C subunits.

It carries out the reaction L-glutamyl-tRNA(Gln) + L-glutamine + ATP + H2O = L-glutaminyl-tRNA(Gln) + L-glutamate + ADP + phosphate + H(+). The enzyme catalyses L-aspartyl-tRNA(Asn) + L-glutamine + ATP + H2O = L-asparaginyl-tRNA(Asn) + L-glutamate + ADP + phosphate + 2 H(+). Its function is as follows. Allows the formation of correctly charged Asn-tRNA(Asn) or Gln-tRNA(Gln) through the transamidation of misacylated Asp-tRNA(Asn) or Glu-tRNA(Gln) in organisms which lack either or both of asparaginyl-tRNA or glutaminyl-tRNA synthetases. The reaction takes place in the presence of glutamine and ATP through an activated phospho-Asp-tRNA(Asn) or phospho-Glu-tRNA(Gln). The chain is Aspartyl/glutamyl-tRNA(Asn/Gln) amidotransferase subunit C from Vesicomyosocius okutanii subsp. Calyptogena okutanii (strain HA).